The sequence spans 474 residues: Sialyltransferase-like protein 1 (474 aa).

Residues 1-14 (MRSHQAGRKLPLLQ) lie on the Cytoplasmic side of the membrane. A helical; Signal-anchor for type II membrane protein membrane pass occupies residues 15–35 (LLGCVAVFSVFVFTIQSSFFA). Over 36-474 (DNNRKLDLQP…CVRHPLKLDT (439 aa)) the chain is Lumenal. N-linked (GlcNAc...) asparagine glycosylation is found at Asn88, Asn120, Asn155, and Asn243. A disordered region spans residues 376 to 421 (RLQRSQQPTSSKRDGSGQFGNCKVWGDADPTKGPVSGSPDMSETRK).

Belongs to the glycosyltransferase 29 family. Highly expressed in inflorescences and siliques and at lower levels in roots, leaves and stems.

The protein localises to the golgi apparatus membrane. Functionally, required for normal pollen grain germination and pollen tube growth. May not be required for pollen development and female gametophytic function. The polypeptide is Sialyltransferase-like protein 1 (Arabidopsis thaliana (Mouse-ear cress)).